Here is a 1147-residue protein sequence, read N- to C-terminus: MQGNREMKRLFVGGLGQGISETDLQNQFGRFGEVSDVEIITRKDDQGNSQKVFAYVNIQITEADLKKCMSILNKTKWKGGTLQIQLAKESFLHRLAQEREDAKAKKEKSTTGNPTLLEKMGAVDFHMKAVPGTEVPGHKNWVVSKFGRVLPVLHLKNQQKHKIMKYDPSKYCHNIKKIPENLTETTPIAELTWELEGGNDPMSKKRRGEFSDFHIPPQKVKKVQKSNDPMESKVSNIGLRTNQVMEKNKSTHPVTAHGTAPSTVNPSKQLLVSSSGTQKPKHVVFHNSDFEIIWNKSSMSDDDVDSEDELKMMIAKEENREKPGHSSVNESEHDTFEVVRDDFKSNIHKLSSSVSLGNNHEYDSSDTDEIIAMKTKNAKVKNSAESSQPERTVSKKSSFQKIEPSNDCIKVQGINSNKESALCHGVKFVNPKFPPDSSGSDSEESEEDEEYKVLMENCPRVSLTLADLEQLAGSHRKFPGKDSETNGPQNDSHCKFDTTSKNPKTSGDLYNGRQQCILPEEIVASLLEDENTYSKQKSEEDILKPKFQAFKGIGCLYAKESVDKTLKENIAFNTGGGHHSSLKHEDHNRSLMENGSKCVNGSSSKLTSCQPAKKVNDPNHIQPPKRQCTFENQNHKVMSSTSCDKGSTNPLPGPLPLKAKTSLHLSANSHKVDSDGDACHWPESRKALEKERTNLSNLESLEKSSKVSPREDPQKSPAGFSLSDSNASCINAKDKQAEDNQKRLAALAAWQKAREVQKKLVHSALANLDGHPEDKKTHIVFASDNESETEETSTQEQSCPEKELMKESVSKSPGKLFDSSDDEDSDSKEDSTRFSIKPQFEGRAGQKLMDLQSQFGSDERFRMDSRFLESDSEDEKKELNEDKVNEDELAAEKKKTLNVVQSVLNINVNNPTNKGSVAAKKFKDIVHYDPTKHDHAIYERKQEDKEKESKATRKKKKEEAEKLPEVSQDMYYNIAADLKEIFQSMSNTDEKEEDVPRTEAGAREGTGKIRNAETLACEPEQTTGFTFSFFDSATKDEKDATYRIELVKHGKIVCPNDPRFQDSSSEEEDIAEEADHSKPSPGEAVPENEAIRFFFFSENDDRLRGSNLFWSGMGGSISRNSWEARTSSLLLECRKKHKEAKRKVKAN.

One can recognise an RRM domain in the interval 8 to 89 (KRLFVGGLGQ…GTLQIQLAKE (82 aa)). A Glycyl lysine isopeptide (Lys-Gly) (interchain with G-Cter in SUMO2) cross-link involves residue Lys-225. Ser-300 and Ser-306 each carry phosphoserine. A Glycyl lysine isopeptide (Lys-Gly) (interchain with G-Cter in SUMO2) cross-link involves residue Lys-316. Tyr-362 bears the Phosphotyrosine mark. Phosphoserine is present on residues Ser-364 and Ser-365. At Thr-367 the chain carries Phosphothreonine. The interval 379–401 (KVKNSAESSQPERTVSKKSSFQK) is disordered. Polar residues predominate over residues 383 to 400 (SAESSQPERTVSKKSSFQ). The residue at position 416 (Ser-416) is a Phosphoserine. Disordered regions lie at residues 427 to 452 (KFVN…EEYK), 472 to 511 (AGSH…DLYN), 592 to 659 (MENG…PLKA), 686 to 741 (KALE…EDNQ), 766 to 888 (ANLD…NEDE), 932 to 963 (KHDH…AEKL), and 986 to 1017 (SNTD…TLAC). The segment covering 441-450 (DSEESEEDEE) has biased composition (acidic residues). Composition is skewed to polar residues over residues 592–610 (MENG…TSCQ) and 629–650 (TFEN…STNP). Composition is skewed to basic and acidic residues over residues 700–714 (SLEK…EDPQ) and 732–741 (AKDKQAEDNQ). Ser-704 bears the Phosphoserine mark. At Thr-777 the chain carries Phosphothreonine. 2 positions are modified to phosphoserine: Ser-783 and Ser-787. Basic and acidic residues predominate over residues 799–809 (CPEKELMKESV). Phosphoserine occurs at positions 819, 820, 825, 827, and 872. A compositionally biased stretch (basic and acidic residues) spans 857-883 (SDERFRMDSRFLESDSEDEKKELNEDK). Coiled coils occupy residues 868–898 (LESD…KTLN) and 937–963 (IYER…AEKL). Residues 994–1011 (DVPRTEAGAREGTGKIRN) are compositionally biased toward basic and acidic residues. Lys-1038 participates in a covalent cross-link: Glycyl lysine isopeptide (Lys-Gly) (interchain with G-Cter in SUMO2). The tract at residues 1055-1086 (PNDPRFQDSSSEEEDIAEEADHSKPSPGEAVP) is disordered. Residues Ser-1063, Ser-1064, Ser-1065, and Ser-1080 each carry the phosphoserine modification.

In terms of assembly, interacts with the GTP form of RRAGA, RRAGC and RRAGD. Interacts with NIP7. Interacts with DDX18; the interaction is RNA-dependent. Interacts with DDX47; the interaction is RNA-dependent. Post-translationally, phosphorylated.

It localises to the nucleus. The protein localises to the nucleolus. Functionally, plays an essential role in the survival of diffuse-type gastric cancer cells. Acts as a nucleolar anchoring protein for DDX47. May be involved in regulation of gene expression at the post-transcriptional level or in ribosome biogenesis in cancer cells. In Mus musculus (Mouse), this protein is Nucleolar protein 8.